Reading from the N-terminus, the 269-residue chain is MVLIQFLTGFFYLYGKRLFSVSKVMDMICLDYYTILPAPLAMMLAARVKNYDLMKKLHEWEIPVDYALLVVDDVPTIDYCLSLGANSPTRAQKRRLLRDTTFNPVYKYLMNCSGFPTKREKNIPCDVQCERLQKTIIKELVFNCSVLLEMILLSEKEYAYALHYAAKYNQLPILMYCWQQSTNAESILLKTCCSDKNINCFNHCILYGGAQNLNAAMIEAAKHDARMLINYCVMLGGKSLNEARETAIIFGHIECAQHCSRLQSYVMRD.

It belongs to the asfivirus MGF 360 family.

Its function is as follows. Plays a role in virus cell tropism, and may be required for efficient virus replication in macrophages. The protein is Protein MGF 360-15R of African swine fever virus (isolate Pig/Kenya/KEN-50/1950) (ASFV).